Reading from the N-terminus, the 447-residue chain is Adenylosuccinate synthetase (447 aa).

Residues 35–41 (GDEGKGK) and 63–65 (GHT) each bind GTP. The active-site Proton acceptor is the aspartate 36. Residues aspartate 36 and glycine 63 each contribute to the Mg(2+) site. IMP contacts are provided by residues 36 to 39 (DEGK), 61 to 64 (NAGH), threonine 153, arginine 167, asparagine 245, threonine 260, and arginine 324. Residue histidine 64 is the Proton donor of the active site. Position 320–326 (320–326 (VTTKRKR)) interacts with substrate. Residues arginine 326, 352–354 (KLD), and 435–437 (GVG) contribute to the GTP site.

The protein belongs to the adenylosuccinate synthetase family. In terms of assembly, homodimer. Requires Mg(2+) as cofactor.

Its subcellular location is the cytoplasm. It catalyses the reaction IMP + L-aspartate + GTP = N(6)-(1,2-dicarboxyethyl)-AMP + GDP + phosphate + 2 H(+). It functions in the pathway purine metabolism; AMP biosynthesis via de novo pathway; AMP from IMP: step 1/2. In terms of biological role, plays an important role in the de novo pathway and in the salvage pathway of purine nucleotide biosynthesis. Catalyzes the first committed step in the biosynthesis of AMP from IMP. Plays a role in the regulation of adult life span. The polypeptide is Adenylosuccinate synthetase (Drosophila melanogaster (Fruit fly)).